The primary structure comprises 106 residues: Large ribosomal subunit protein uL24 (106 aa).

The protein belongs to the universal ribosomal protein uL24 family. Part of the 50S ribosomal subunit.

Functionally, one of two assembly initiator proteins, it binds directly to the 5'-end of the 23S rRNA, where it nucleates assembly of the 50S subunit. One of the proteins that surrounds the polypeptide exit tunnel on the outside of the subunit. The sequence is that of Large ribosomal subunit protein uL24 from Paramagnetospirillum magneticum (strain ATCC 700264 / AMB-1) (Magnetospirillum magneticum).